The chain runs to 71 residues: Large ribosomal subunit protein uL29 (71 aa).

Belongs to the universal ribosomal protein uL29 family.

The sequence is that of Large ribosomal subunit protein uL29 from Roseiflexus sp. (strain RS-1).